The sequence spans 55 residues: MEFTTAMFGTSLIFTTSTQSKHNLVNNCCCSSSTSESSMPASCACTKCGCKTCKC.

The protein belongs to the metallothionein superfamily. Type 11 family.

The sequence is that of Metallothionein-1 (MTP1) from Yarrowia lipolytica (strain CLIB 122 / E 150) (Yeast).